Consider the following 272-residue polypeptide: Glutamate racemase (272 aa).

Substrate-binding positions include 13–14 (DS) and 45–46 (YG). C76 functions as the Proton donor/acceptor in the catalytic mechanism. 77–78 (NT) provides a ligand contact to substrate. C186 acts as the Proton donor/acceptor in catalysis. 187 to 188 (TH) serves as a coordination point for substrate.

The protein belongs to the aspartate/glutamate racemases family.

It carries out the reaction L-glutamate = D-glutamate. It participates in cell wall biogenesis; peptidoglycan biosynthesis. Functionally, provides the (R)-glutamate required for cell wall biosynthesis. This chain is Glutamate racemase, found in Cupriavidus pinatubonensis (strain JMP 134 / LMG 1197) (Cupriavidus necator (strain JMP 134)).